The chain runs to 96 residues: UPF0235 protein SO_3356 (96 aa).

It belongs to the UPF0235 family.

The protein is UPF0235 protein SO_3356 of Shewanella oneidensis (strain ATCC 700550 / JCM 31522 / CIP 106686 / LMG 19005 / NCIMB 14063 / MR-1).